Consider the following 1117-residue polypeptide: RNA-directed RNA polymerase (1117 aa).

A compositionally biased stretch (polar residues) spans 1 to 17; sequence MTVSGRSSWQNGKTTNA. The disordered stretch occupies residues 1–23; it reads MTVSGRSSWQNGKTTNAMRAGKL.

It carries out the reaction RNA(n) + a ribonucleoside 5'-triphosphate = RNA(n+1) + diphosphate. RNA-dependent RNA polymerase which replicates the viral genome. This Penicillium chrysogenum (Penicillium notatum) protein is RNA-directed RNA polymerase (p1).